A 342-amino-acid chain; its full sequence is Aristolochene synthase prx2 (342 aa).

Residues D115, N244, S248, and E252 each contribute to the Mg(2+) site. Residues R340 and Y341 each contribute to the (2E,6E)-farnesyl diphosphate site.

It belongs to the terpene synthase family. In terms of assembly, homodimer. Mg(2+) is required as a cofactor.

It carries out the reaction (2E,6E)-farnesyl diphosphate = (+)-aristolochene + diphosphate. It participates in sesquiterpene biosynthesis; aristolochene biosynthesis; aristolochene from farnesyl diphosphate: step 1/1. Its function is as follows. Aristolochene synthase; part of the gene cluster that mediates the biosynthesis of PR-toxin, a bicyclic sesquiterpene belonging to the eremophilane class and acting as a mycotoxin. The first step of the pathway is catalyzed by the aristolochene synthase which performs the cyclization of trans,trans-farnesyl diphosphate (FPP) to the bicyclic sesquiterpene aristolochene. Following the formation of aristolochene, the non-oxygenated aristolochene is converted to the trioxygenated intermediate eremofortin B, via 7-epi-neopetasone. This conversion appears to involve three enzymes, a hydroxysterol oxidase-like enzyme, the quinone-oxidase prx3 that forms the quinone-type-structure in the bicyclic nucleus of aristolochene with the C8-oxo group and the C-3 hydroxyl group, and the P450 monooxygenase prx9 that introduces the epoxide at the double bond between carbons 1 and 2. No monoxy or dioxy-intermediates have been reported to be released to the broth, so these three early oxidative reactions may be coupled together. Eremofortin B is further oxidized by another P450 monooxygenase, that introduces a second epoxide between carbons 7 and 11 prior to acetylation to eremofortin A by the acetyltransferase prx11. The second epoxidation may be performed by a second P450 monooxygenase. After the acetylation step, the conversion of eremofortin A to eremofortin C and then to PR-toxin requires only two enzymes. First the conversion of eremofortin A to eremofortin C proceeds by oxidation of the side chain of the molecule at C-12 and is catalyzed by the short-chain oxidoreductase prx1. The cytochrome P450 monooxygenase prx8 also plays a role in this step. The primary alcohol formed at C-12 is finally oxidized by the short-chain alcohol dehydrogenase prx4 that forms PR-toxin. The polypeptide is Aristolochene synthase prx2 (Penicillium rubens (strain ATCC 28089 / DSM 1075 / NRRL 1951 / Wisconsin 54-1255) (Penicillium chrysogenum)).